A 524-amino-acid polypeptide reads, in one-letter code: Lysine--tRNA ligase (524 aa).

Glutamate 431 and glutamate 438 together coordinate Mg(2+).

This sequence belongs to the class-II aminoacyl-tRNA synthetase family. As to quaternary structure, homodimer. The cofactor is Mg(2+).

The protein localises to the cytoplasm. It catalyses the reaction tRNA(Lys) + L-lysine + ATP = L-lysyl-tRNA(Lys) + AMP + diphosphate. The protein is Lysine--tRNA ligase (lysS) of Chlamydia muridarum (strain MoPn / Nigg).